We begin with the raw amino-acid sequence, 595 residues long: uncharacterized protein (595 aa).

Residues 1 to 23 (MLSLSSPPWLLLLVLFFFANGSA) form the signal peptide. Residues Asn-31, Asn-63, Asn-88, Asn-112, Asn-144, Asn-187, Asn-205, Asn-389, Asn-480, Asn-492, and Asn-506 are each glycosylated (N-linked (GlcNAc...) asparagine). The segment covering 61–83 (LENQTASSSNLNTNNEASDEQTG) has biased composition (polar residues). 2 disordered regions span residues 61–119 (LENQ…VSSL) and 141–164 (TALN…TKGE). A compositionally biased stretch (low complexity) spans 84–119 (NSNSNTSSHSRNINGLPSSNSNIDNANSNSSSVSSL).

The protein resides in the secreted. This is an uncharacterized protein from Drosophila melanogaster (Fruit fly).